An 83-amino-acid polypeptide reads, in one-letter code: MKTLLLTLVVVTIVCLDLGYTMTCYNQQSSEAKTTTTCSGGVSSCYKKTWSDGRGTIIERGCGCPSVKKGIERICCRTDKCNN.

Positions 1–21 (MKTLLLTLVVVTIVCLDLGYT) are cleaved as a signal peptide. Intrachain disulfides connect C24/C45, C38/C62, C64/C75, and C76/C81.

This sequence belongs to the three-finger toxin family. Short-chain subfamily. Type I alpha-neurotoxin sub-subfamily. Expressed by the venom gland.

It is found in the secreted. Binds to muscle nicotinic acetylcholine receptor (nAChR) and inhibit acetylcholine from binding to the receptor, thereby impairing neuromuscular transmission. This is Short neurotoxin 1 from Oxyuranus scutellatus scutellatus (Australian taipan).